We begin with the raw amino-acid sequence, 260 residues long: Global transcriptional regulator CodY (260 aa).

The tract at residues Met-1–Leu-159 is GAF domain. The segment at residues Ala-207–Arg-226 is a DNA-binding region (H-T-H motif).

This sequence belongs to the CodY family.

It localises to the cytoplasm. Functionally, DNA-binding global transcriptional regulator which is involved in the adaptive response to starvation and acts by directly or indirectly controlling the expression of numerous genes in response to nutrient availability. During rapid exponential growth, CodY is highly active and represses genes whose products allow adaptation to nutrient depletion. The protein is Global transcriptional regulator CodY of Streptococcus equi subsp. zooepidemicus (strain MGCS10565).